A 156-amino-acid polypeptide reads, in one-letter code: Arginine repressor (156 aa).

It belongs to the ArgR family.

It localises to the cytoplasm. Its pathway is amino-acid biosynthesis; L-arginine biosynthesis [regulation]. Functionally, regulates arginine biosynthesis genes. This chain is Arginine repressor, found in Edwardsiella ictaluri (strain 93-146).